Consider the following 120-residue polypeptide: Large ribosomal subunit protein bL12 (120 aa).

It belongs to the bacterial ribosomal protein bL12 family. As to quaternary structure, homodimer. Part of the ribosomal stalk of the 50S ribosomal subunit. Forms a multimeric L10(L12)X complex, where L10 forms an elongated spine to which 2 to 4 L12 dimers bind in a sequential fashion. Binds GTP-bound translation factors.

Functionally, forms part of the ribosomal stalk which helps the ribosome interact with GTP-bound translation factors. Is thus essential for accurate translation. The sequence is that of Large ribosomal subunit protein bL12 from Lactobacillus gasseri (strain ATCC 33323 / DSM 20243 / BCRC 14619 / CIP 102991 / JCM 1131 / KCTC 3163 / NCIMB 11718 / NCTC 13722 / AM63).